Reading from the N-terminus, the 408-residue chain is Aspartate aminotransferase (408 aa).

3 residues coordinate L-aspartate: glycine 45, tryptophan 134, and asparagine 184. N6-(pyridoxal phosphate)lysine is present on lysine 247. Arginine 382 provides a ligand contact to L-aspartate.

The protein belongs to the class-I pyridoxal-phosphate-dependent aminotransferase family. In terms of assembly, homodimer. Pyridoxal 5'-phosphate is required as a cofactor.

It localises to the cytoplasm. The enzyme catalyses L-aspartate + 2-oxoglutarate = oxaloacetate + L-glutamate. In terms of biological role, catalyzes the reversible conversion of aspartate and 2-oxoglutarate to glutamate and oxaloacetate. Does not have prephenate aminotransferase activity. The chain is Aspartate aminotransferase from Streptomyces avermitilis (strain ATCC 31267 / DSM 46492 / JCM 5070 / NBRC 14893 / NCIMB 12804 / NRRL 8165 / MA-4680).